Here is a 265-residue protein sequence, read N- to C-terminus: Putative Tubby-like protein 4 (265 aa).

In terms of domain architecture, F-box spans 1 to 44; that stretch reads MPPELLRDVLMRIERSEDTWPSRKNVVSCVGVCKNWRQIFKEIV. One can recognise an FBD domain in the interval 228-250; that stretch reads SYELKLALYFAKNSAILKKFVLR.

It belongs to the TUB family.

In Arabidopsis thaliana (Mouse-ear cress), this protein is Putative Tubby-like protein 4.